A 570-amino-acid chain; its full sequence is Carotenoid cleavage dioxygenase 8, chloroplastic (570 aa).

A chloroplast-targeting transit peptide spans 1–56; sequence MASLITTKAMMSHHHVLSSTRITTLYSDNSIGDQQIKTKPQVPHRLFARRIFGVTR. His-254, His-305, His-372, and His-563 together coordinate Fe cation.

This sequence belongs to the carotenoid oxygenase family. Requires Fe(2+) as cofactor. As to expression, expressed in flowers, siliques, inflorescence stems, petiole and leaves, and at a much higher level in roots.

The protein resides in the plastid. It localises to the chloroplast. It catalyses the reaction 9-cis-10'-apo-beta-carotenal + 2 O2 = (2E,4E,6E)-7-hydroxy-4-methylhepta-2,4,6-trienal + (11R)-carlactone. It carries out the reaction all-trans-10'-apo-beta-carotenal + O2 = (2E,4E,6E)-4-methylocta-2,4,6-trienedial + 13-apo-beta-carotenone. Its function is as follows. Involved in strigolactones biosynthesis by cleaving the C(27) 9-cis-10'-apo-beta-carotenal produced by CCD7. Produces the C(19) carlactone and a C(8) hydroxyaldehyde. Also shows lower activity with all-trans-10'-apo-beta-carotenal producing a C(9) dialdehyde and the C(18) 13-apo-beta-carotenone. Strigolactones are hormones that inhibit tillering and shoot branching through the MAX-dependent pathway, contribute to the regulation of shoot architectural response to phosphate-limiting conditions and function as rhizosphere signal that stimulates hyphal branching of arbuscular mycorrhizal fungi and trigger seed germination of root parasitic weeds. Also active on other carotenoid substrates like licopene or zeaxanthin. This chain is Carotenoid cleavage dioxygenase 8, chloroplastic, found in Arabidopsis thaliana (Mouse-ear cress).